Reading from the N-terminus, the 401-residue chain is MQPFGDAWSQRHLAGVVLAGSVLSIVGSLYMILGFFFLRECRSFRHKLILGLAVSDLLLALNFFIPSLSMVTGREISSPWNEGFCSANGFLMQLFFAQIDVWQISIALITLLMLSGPSMVLKWIRENVWAVWLFPWLVSLIAAFFAFGFWDYANVGGFCWLGSRNIRLYFNYIPRWIIILVCLVIYIAVYRLILHARRRANIQKTYRGRASDRAPPQPVTTTAPATNPESEKVNPDEISSGNGSSSLDTSRSGSSTGFTQTVHDPAVAGQIQTAAERAQEEAEQQKQVRKIAIQMISYPLAYAVLWAIPTIVMIIQVARGGEGVSIHVEGLAKMLLVFNGFVDAHVYGFNERTAMGWRQRIRPAAQEDDEEAAGTSGGVHEVVSRPEPTLKNPNVWQQNMV.

Over 1–16 the chain is Extracellular; that stretch reads MQPFGDAWSQRHLAGV. The helical transmembrane segment at 17-37 threads the bilayer; that stretch reads VLAGSVLSIVGSLYMILGFFF. The Cytoplasmic segment spans residues 38–47; sequence LRECRSFRHK. Residues 48 to 68 traverse the membrane as a helical segment; the sequence is LILGLAVSDLLLALNFFIPSL. The Extracellular portion of the chain corresponds to 69 to 93; that stretch reads SMVTGREISSPWNEGFCSANGFLMQ. Cys85 and Cys159 are oxidised to a cystine. Residues 94–114 form a helical membrane-spanning segment; sequence LFFAQIDVWQISIALITLLML. The Cytoplasmic segment spans residues 115–128; the sequence is SGPSMVLKWIRENV. The helical transmembrane segment at 129–149 threads the bilayer; it reads WAVWLFPWLVSLIAAFFAFGF. Residues 150-175 lie on the Extracellular side of the membrane; sequence WDYANVGGFCWLGSRNIRLYFNYIPR. The helical transmembrane segment at 176-196 threads the bilayer; that stretch reads WIIILVCLVIYIAVYRLILHA. Residues 197–294 are Cytoplasmic-facing; the sequence is RRRANIQKTY…QKQVRKIAIQ (98 aa). The segment at 206 to 259 is disordered; sequence YRGRASDRAPPQPVTTTAPATNPESEKVNPDEISSGNGSSSLDTSRSGSSTGFT. Positions 239-257 are enriched in low complexity; it reads SSGNGSSSLDTSRSGSSTG. Residues 295 to 315 traverse the membrane as a helical segment; the sequence is MISYPLAYAVLWAIPTIVMII. Residues 316–321 are Extracellular-facing; sequence QVARGG. Residues 322–342 form a helical membrane-spanning segment; it reads EGVSIHVEGLAKMLLVFNGFV. Topologically, residues 343-401 are cytoplasmic; the sequence is DAHVYGFNERTAMGWRQRIRPAAQEDDEEAAGTSGGVHEVVSRPEPTLKNPNVWQQNMV. The tract at residues 362–401 is disordered; it reads RPAAQEDDEEAAGTSGGVHEVVSRPEPTLKNPNVWQQNMV. A compositionally biased stretch (polar residues) spans 391–401; it reads KNPNVWQQNMV.

Belongs to the G-protein coupled receptor 1 family. Interacts with ascaroside receptor GPR2; may form a functional heterodimer. Interacts with guanine nucleotide-binding protein alpha GPA2; to activate adenylate cyclase and positively regulate nematode trap formation.

Its subcellular location is the cell membrane. G protein-coupled receptor that senses nematode ascaroside pheromones and signals via adenylate cyclase to positively regulate trap formation for nematode capture. The chain is Ascaroside receptor GPR3 from Arthrobotrys oligospora (strain ATCC 24927 / CBS 115.81 / DSM 1491) (Nematode-trapping fungus).